The chain runs to 158 residues: Phosphopantetheine adenylyltransferase (158 aa).

Substrate is bound at residue threonine 9. ATP is bound by residues 9 to 10 (TF) and histidine 17. Residues lysine 41, leucine 73, and arginine 87 each contribute to the substrate site. ATP-binding positions include 88 to 90 (GVR), glutamate 98, and 123 to 129 (WSYVSST).

This sequence belongs to the bacterial CoaD family. Homohexamer. It depends on Mg(2+) as a cofactor.

It localises to the cytoplasm. It carries out the reaction (R)-4'-phosphopantetheine + ATP + H(+) = 3'-dephospho-CoA + diphosphate. Its pathway is cofactor biosynthesis; coenzyme A biosynthesis; CoA from (R)-pantothenate: step 4/5. Reversibly transfers an adenylyl group from ATP to 4'-phosphopantetheine, yielding dephospho-CoA (dPCoA) and pyrophosphate. In Histophilus somni (strain 2336) (Haemophilus somnus), this protein is Phosphopantetheine adenylyltransferase.